The following is a 252-amino-acid chain: T-box transcription factor mls-1 (252 aa).

Positions 40 to 210 (LWRRFHNLGT…SNPFAKGFRE (171 aa)) form a DNA-binding region, T-box.

May interact with unc-37.

The protein resides in the nucleus. Functionally, probable transcription factor required for the cell fate specification of non-striated uterine muscle precursor cells. Furthermore, may function with the transcriptional corepressor unc-37. This is T-box transcription factor mls-1 from Caenorhabditis elegans.